Here is a 267-residue protein sequence, read N- to C-terminus: Short-chain dehydrogenase/reductase GME11361 (267 aa).

Positions 10, 36, 42, 57, 80, 129, 133, 162, and 164 each coordinate NADP(+). The active-site Proton acceptor is the Y129. Residue K133 is the Lowers pKa of active site Tyr of the active site.

The protein belongs to the short-chain dehydrogenases/reductases (SDR) family.

It participates in secondary metabolite biosynthesis. Its function is as follows. Short-chain dehydrogenase/reductase; part of the gene cluster that mediates the biosynthesis of dibenzodioxocinones such as pestalotiollide B, a novel class of inhibitors against cholesterol ester transfer protein (CEPT). The biosynthesis initiates from condensation of acetate and malonate units catalyzed by the non-reducing PKS pks8/GME11356. Pks8/GME11356 lacks a thioesterase (TE) domain, which is important to the cyclizing of the third ring of atrochrysone carboxylic acid, and the esterase GME11355 might play the role of TE and catalyzes the cyclization reaction of the C ring. The lactamase-like protein GME11357 (or other beta-lactamases in Pestalotiopsis microspora) probably hydrolyzes the thioester bond between the ACP of pks8/GME11356 and the intermediate to release atrochrysone carboxylic acid, which is spontaneously dehydrates to form endocrocin anthrone. Endocrocin anthrone is further converted to emodin via the endocrocin intermediate. Emodin is then oxidized by several enzymes such as the Baeyer-Villiger oxidase GME11358, the oxidoreductase GME11367, the short chain dehydrogenase/reductase GME11373, as well as by other oxidoreductases from the cluster, to modify the A and C rings and open the B ring, and finally yield monodictyphenone. The prenyltransferase GME11375 may catalyze the addition reaction between the C5 side chains and the carbon bone of dibenzodioxocinones. The remaining biochemical reactions to the final product dibenzodioxocinones should be methylation catalyzed by methyltransferase GME11366 and reduction and lactonization reaction catalyzed by a series of oxidordeuctases. The polypeptide is Short-chain dehydrogenase/reductase GME11361 (Pestalotiopsis microspora).